Consider the following 251-residue polypeptide: Triosephosphate isomerase (251 aa).

9-11 (NWK) lines the substrate pocket. His-95 acts as the Electrophile in catalysis. Catalysis depends on Glu-167, which acts as the Proton acceptor. Substrate-binding positions include Gly-173, Ser-212, and 233–234 (GG).

Belongs to the triosephosphate isomerase family. As to quaternary structure, homodimer.

The protein localises to the cytoplasm. The enzyme catalyses D-glyceraldehyde 3-phosphate = dihydroxyacetone phosphate. It participates in carbohydrate biosynthesis; gluconeogenesis. Its pathway is carbohydrate degradation; glycolysis; D-glyceraldehyde 3-phosphate from glycerone phosphate: step 1/1. Involved in the gluconeogenesis. Catalyzes stereospecifically the conversion of dihydroxyacetone phosphate (DHAP) to D-glyceraldehyde-3-phosphate (G3P). The chain is Triosephosphate isomerase from Pseudomonas entomophila (strain L48).